We begin with the raw amino-acid sequence, 370 residues long: Biotin synthase (370 aa).

A Radical SAM core domain is found at 50 to 276; the sequence is FSDGTVDACS…IAVYRFLHPE (227 aa). [4Fe-4S] cluster contacts are provided by Cys-68, Cys-72, and Cys-75. [2Fe-2S] cluster-binding residues include Cys-208 and Arg-280. The tract at residues 328 to 370 is disordered; the sequence is AGLEPNREANTFDPESVKARHRSPAAETASNANRTNATTETDD. Residues 352–370 are compositionally biased toward low complexity; sequence AAETASNANRTNATTETDD.

The protein belongs to the radical SAM superfamily. Biotin synthase family. As to quaternary structure, homodimer. [4Fe-4S] cluster is required as a cofactor. Requires [2Fe-2S] cluster as cofactor.

It carries out the reaction (4R,5S)-dethiobiotin + (sulfur carrier)-SH + 2 reduced [2Fe-2S]-[ferredoxin] + 2 S-adenosyl-L-methionine = (sulfur carrier)-H + biotin + 2 5'-deoxyadenosine + 2 L-methionine + 2 oxidized [2Fe-2S]-[ferredoxin]. It functions in the pathway cofactor biosynthesis; biotin biosynthesis; biotin from 7,8-diaminononanoate: step 2/2. In terms of biological role, catalyzes the conversion of dethiobiotin (DTB) to biotin by the insertion of a sulfur atom into dethiobiotin via a radical-based mechanism. This Natronomonas pharaonis (strain ATCC 35678 / DSM 2160 / CIP 103997 / JCM 8858 / NBRC 14720 / NCIMB 2260 / Gabara) (Halobacterium pharaonis) protein is Biotin synthase.